Reading from the N-terminus, the 188-residue chain is NEDD8-conjugating enzyme UBC12 (188 aa).

M1 carries the N-acetylmethionine modification. The segment covering 1 to 12 has biased composition (basic residues); that stretch reads MLKLRQLQKKKQ. The interval 1–23 is disordered; sequence MLKLRQLQKKKQKENENSSSIQP. One can recognise a UBC core domain in the interval 27-177; sequence AARIRLKRDL…VRLTMSGGSI (151 aa). Catalysis depends on C115, which acts as the Glycyl thioester intermediate.

The protein belongs to the ubiquitin-conjugating enzyme family. UBC12 subfamily. As to quaternary structure, interacts with DCN1. Post-translationally, the acetylation of Met-1 is cotranslational, and not regulatory. The N-acetylmethionine increases affinity for DCUN1D1 by about 2 orders of magnitude and is crucial for NEDD8 transfer to cullins.

It catalyses the reaction [E1 NEDD8-activating enzyme]-S-[NEDD8 protein]-yl-L-cysteine + [E2 NEDD8-conjugating enzyme]-L-cysteine = [E1 NEDD8-activating enzyme]-L-cysteine + [E2 NEDD8-conjugating enzyme]-S-[NEDD8-protein]-yl-L-cysteine.. It functions in the pathway protein modification; protein neddylation. Functionally, accepts the ubiquitin-like protein NEDD8/RUB1 from the UBA3-ULA1 E1 complex and catalyzes its covalent attachment to other proteins. The major substrate is CDC53/Cullin. This is NEDD8-conjugating enzyme UBC12 (UBC12) from Saccharomyces cerevisiae (strain ATCC 204508 / S288c) (Baker's yeast).